Consider the following 563-residue polypeptide: Probable tRNA (uracil-O(2)-)-methyltransferase (563 aa).

The C3H1-type zinc-finger motif lies at 536–563; it reads TIRKAPCWMSLHHPDGCPVGQEACRYEH.

The protein belongs to the TRM44 family.

It is found in the cytoplasm. The catalysed reaction is uridine(44) in tRNA(Ser) + S-adenosyl-L-methionine = 2'-O-methyluridine(44) in tRNA(Ser) + S-adenosyl-L-homocysteine + H(+). In terms of biological role, probable adenosyl-L-methionine (AdoMet)-dependent tRNA (uracil-O(2)-)-methyltransferase. In Caenorhabditis elegans, this protein is Probable tRNA (uracil-O(2)-)-methyltransferase.